An 801-amino-acid chain; its full sequence is Phosphatidylinositol 3-kinase pik3 (801 aa).

One can recognise a C2 PI3K-type domain in the interval 14-166 (VTARFLVKFC…RLDGLLLKLQ (153 aa)). The PIK helical domain occupies 257–439 (DKDLKPNSKI…SSVMFLFQKE (183 aa)). A PI3K/PI4K catalytic domain is found at 515–785 (IPDACTVFKS…LINDSVSALF (271 aa)). Positions 521–527 (VFKSTMQ) are G-loop. The interval 654–662 (GVGDRHLDN) is catalytic loop. Residues 673 to 694 (HADFGYILGRDPKLFSPAMKLS) form an activation loop region.

This sequence belongs to the PI3/PI4-kinase family. In terms of assembly, component of the autophagy-specific vps34 PI3-kinase complex I composed of vps15, atg6, pik3/vps34, atg14 and atg38. Also a component of the VPS34 PI3-kinase complex II composed of atg6, pik3, vps15 and vps38.

It catalyses the reaction a 1,2-diacyl-sn-glycero-3-phospho-(1D-myo-inositol) + ATP = a 1,2-diacyl-sn-glycero-3-phospho-(1D-myo-inositol-3-phosphate) + ADP + H(+). Functionally, phosphatidylinositol 3-kinase that functions as a part of the autophagy-specific VPS34 PI3-kinase complex I that plays a role in autophagosome assembly. This complex is essential to recruit the atg8-phosphatidylinositol conjugate and the atg12-atg5 conjugate to the pre-autophagosomal structure. Also functions as part of the VPS34 PI3-kinase complex II. This Schizosaccharomyces pombe (strain 972 / ATCC 24843) (Fission yeast) protein is Phosphatidylinositol 3-kinase pik3 (pik3).